A 168-amino-acid polypeptide reads, in one-letter code: Large ribosomal subunit protein uL10 (168 aa).

Belongs to the universal ribosomal protein uL10 family. As to quaternary structure, part of the ribosomal stalk of the 50S ribosomal subunit. The N-terminus interacts with L11 and the large rRNA to form the base of the stalk. The C-terminus forms an elongated spine to which L12 dimers bind in a sequential fashion forming a multimeric L10(L12)X complex.

Forms part of the ribosomal stalk, playing a central role in the interaction of the ribosome with GTP-bound translation factors. The polypeptide is Large ribosomal subunit protein uL10 (Pediococcus pentosaceus (strain ATCC 25745 / CCUG 21536 / LMG 10740 / 183-1w)).